Consider the following 347-residue polypeptide: Quinolinate synthase (347 aa).

His-47 and Ser-68 together coordinate iminosuccinate. Cys-113 serves as a coordination point for [4Fe-4S] cluster. Iminosuccinate is bound by residues Tyr-139–Asn-141 and Ser-156. Cys-200 is a [4Fe-4S] cluster binding site. Iminosuccinate is bound by residues His-226–Glu-228 and Thr-243. Cys-297 is a [4Fe-4S] cluster binding site.

The protein belongs to the quinolinate synthase family. Type 1 subfamily. It depends on [4Fe-4S] cluster as a cofactor.

It is found in the cytoplasm. It carries out the reaction iminosuccinate + dihydroxyacetone phosphate = quinolinate + phosphate + 2 H2O + H(+). Its pathway is cofactor biosynthesis; NAD(+) biosynthesis; quinolinate from iminoaspartate: step 1/1. Functionally, catalyzes the condensation of iminoaspartate with dihydroxyacetone phosphate to form quinolinate. The polypeptide is Quinolinate synthase (Escherichia coli O9:H4 (strain HS)).